The following is a 649-amino-acid chain: Microtubule-associated protein VP6 (649 aa).

It localises to the virion. The protein localises to the host cytoplasm. Its subcellular location is the host cytoskeleton. Minor inner capsid component. Displays NTPase and RNA 5'-triphosphatase (RTPase) activities. May function as a cofactor of polymerase VP2. Associates with microtubules and plays a role in the formation, structural organization and morphology of viral inclusions, where the assembly of cores and the replication of viral RNA occur. The chain is Microtubule-associated protein VP6 (S6) from Cryphonectria parasitica (Chestnut blight fungus).